Here is an 89-residue protein sequence, read N- to C-terminus: ISHIAEASESRFVMEDWHNFGSDYDKTLMAWHERFNQAWPELSSRYSATFRRMFNYYLCACAGAFRARDIELWQVLFSRGVEGGIRVYR.

Residue Cys61 is part of the active site.

Belongs to the CFA/CMAS family.

It localises to the cytoplasm. The catalysed reaction is a 1-acyl-2-(9Z)-enoyl-sn-glycero-3-phospholipid + S-adenosyl-L-methionine = a 1-acyl-2-(9-cyclopronane)-acyl-sn-glycero-3-phospholipid + S-adenosyl-L-homocysteine + H(+). Functionally, transfers a methylene group from S-adenosyl-L-methionine to the cis double bond of an unsaturated fatty acid chain resulting in the replacement of the double bond with a methylene bridge. In Citrobacter freundii, this protein is Cyclopropane-fatty-acyl-phospholipid synthase (cfa).